A 94-amino-acid polypeptide reads, in one-letter code: Pyrimidine/purine nucleoside phosphorylase (94 aa).

It belongs to the nucleoside phosphorylase PpnP family.

It carries out the reaction a purine D-ribonucleoside + phosphate = a purine nucleobase + alpha-D-ribose 1-phosphate. The catalysed reaction is adenosine + phosphate = alpha-D-ribose 1-phosphate + adenine. The enzyme catalyses cytidine + phosphate = cytosine + alpha-D-ribose 1-phosphate. It catalyses the reaction guanosine + phosphate = alpha-D-ribose 1-phosphate + guanine. It carries out the reaction inosine + phosphate = alpha-D-ribose 1-phosphate + hypoxanthine. The catalysed reaction is thymidine + phosphate = 2-deoxy-alpha-D-ribose 1-phosphate + thymine. The enzyme catalyses uridine + phosphate = alpha-D-ribose 1-phosphate + uracil. It catalyses the reaction xanthosine + phosphate = alpha-D-ribose 1-phosphate + xanthine. Catalyzes the phosphorolysis of diverse nucleosides, yielding D-ribose 1-phosphate and the respective free bases. Can use uridine, adenosine, guanosine, cytidine, thymidine, inosine and xanthosine as substrates. Also catalyzes the reverse reactions. The protein is Pyrimidine/purine nucleoside phosphorylase of Salmonella heidelberg (strain SL476).